The sequence spans 695 residues: NADPH--cytochrome P450 reductase (695 aa).

At 1–8 the chain is on the lumenal side; that stretch reads MAQLDTLD. Residues 9-31 traverse the membrane as a helical segment; sequence VVVLAVLLAGSIAYFTKGTFWAV. At 32–695 the chain is on the cytoplasmic side; the sequence is AKDPYASSGP…SGSYQEDVWS (664 aa). Positions 66-221 constitute a Flavodoxin-like domain; that stretch reads CVIFYGSQTG…DFLAWKEPMW (156 aa). FMN is bound by residues 72-77, 123-126, 169-178, and D204; these read SQTGTA, ATYG, and LGNNTYEHYN. An FAD-binding FR-type domain is found at 277–538; sequence HNPYIAPIVE…HVRHSNFKLP (262 aa). Residue R296 coordinates NADP(+). Residues 451–454, 469–471, and 486–489 contribute to the FAD site; these read RYYS, TAV, and GVTT. Residues 497–516 are disordered; the sequence is QKQNGDPSPDPHGQTYAING. NADP(+)-binding positions include T552, 614-615, 620-624, and E656; these read SR and KVYVQ. W694 contacts FAD.

Belongs to the NADPH--cytochrome P450 reductase family. This sequence in the N-terminal section; belongs to the flavodoxin family. It in the C-terminal section; belongs to the flavoprotein pyridine nucleotide cytochrome reductase family. It depends on FAD as a cofactor. FMN is required as a cofactor.

Its subcellular location is the endoplasmic reticulum membrane. The protein resides in the mitochondrion outer membrane. It is found in the cell membrane. The catalysed reaction is 2 oxidized [cytochrome P450] + NADPH = 2 reduced [cytochrome P450] + NADP(+) + H(+). This enzyme is required for electron transfer from NADP to cytochrome P450 in microsomes. It can also provide electron transfer to heme oxygenase and cytochrome B5. Involved in ergosterol biosynthesis. This chain is NADPH--cytochrome P450 reductase, found in Emericella nidulans (strain FGSC A4 / ATCC 38163 / CBS 112.46 / NRRL 194 / M139) (Aspergillus nidulans).